The following is a 415-amino-acid chain: Phakinin (415 aa).

The segment at Met1–Ser26 is disordered. Ser2 is modified (N-acetylserine). The tract at residues Ser2–Cys114 is head. A phosphoserine mark is found at Ser26, Ser32, and Ser35. Thr53 bears the Phosphothreonine mark. 2 positions are modified to phosphoserine: Ser90 and Ser100. The IF rod domain occupies Asp104 to Ser415. 3 coiled-coil regions span residues Leu115 to Ala144, Arg199 to Leu248, and Gln295 to Lys395. The interval Cys396–Ser415 is tail.

It belongs to the intermediate filament family. In terms of assembly, part of a complex required for lens intermediate filament formation composed of BFSP1, BFSP2 and CRYAA. Found in a complex composed of PPL (via C-terminal linker domain), BFSP1 and BFSP2 in the retinal lens. Within the complex interacts with PPL (via C-terminal linker domain) and with BFSP1. Identified in a complex that contains VIM, EZR, AHNAK, BFSP1, BFSP2, ANK2, PLEC, PRX and spectrin. Interacts with LGSN. Interacts with VIM. As to expression, abundantly expressed in both the inner and outer cortex of the retina, expressed at a lower level in the nucleus of the retina (at protein level). Detected in eye lens fiber cells (at protein level).

Its subcellular location is the cell membrane. The protein resides in the cytoplasm. It is found in the cytoskeleton. The protein localises to the cell cortex. Functionally, required for the correct formation of lens intermediate filaments as part of a complex composed of BFSP1, BFSP2 and CRYAA. Plays a role in maintenance of retinal lens optical clarity. The polypeptide is Phakinin (BFSP2) (Bos taurus (Bovine)).